Consider the following 316-residue polypeptide: Taste receptor type 2 member 3 (316 aa).

Over M1–G7 the chain is Extracellular. The chain crosses the membrane as a helical span at residues I8–V28. Over S29–S50 the chain is Cytoplasmic. Residues L51–F71 form a helical membrane-spanning segment. At S72 to D86 the chain is on the extracellular side. Residues V87–Y107 form a helical membrane-spanning segment. Over C108–R128 the chain is Cytoplasmic. Residues V129–M149 traverse the membrane as a helical segment. Residues N150 to N186 are Extracellular-facing. N-linked (GlcNAc...) asparagine glycosylation is present at N166. Residues L187–L207 traverse the membrane as a helical segment. Residues G208–R234 are Cytoplasmic-facing. The chain crosses the membrane as a helical span at residues I235–S255. Topologically, residues S256 to R266 are extracellular. A helical transmembrane segment spans residues I267–G287. The Cytoplasmic portion of the chain corresponds to N288–S316.

The protein belongs to the G-protein coupled receptor T2R family.

It localises to the membrane. Its function is as follows. Gustducin-coupled receptor implicated in the perception of bitter compounds in the oral cavity and the gastrointestinal tract. Signals through PLCB2 and the calcium-regulated cation channel TRPM5. In Rattus norvegicus (Rat), this protein is Taste receptor type 2 member 3.